We begin with the raw amino-acid sequence, 412 residues long: [Pyruvate dehydrogenase (acetyl-transferring)] kinase isozyme 4, mitochondrial (412 aa).

Residues I138–S368 enclose the Histidine kinase domain. Residues E254–R261, D293, S312–T313, and G329–L334 each bind ATP.

The protein belongs to the PDK/BCKDK protein kinase family. Homodimer. Interacts with the pyruvate dehydrogenase complex subunit DLAT, and is part of the multimeric pyruvate dehydrogenase complex that contains multiple copies of pyruvate dehydrogenase (E1), dihydrolipoamide acetyltransferase (DLAT, E2) and lipoamide dehydrogenase (DLD, E3). Detected in heart, white adipose tissue and muscle.

The protein resides in the mitochondrion matrix. It carries out the reaction L-seryl-[pyruvate dehydrogenase E1 alpha subunit] + ATP = O-phospho-L-seryl-[pyruvate dehydrogenase E1 alpha subunit] + ADP + H(+). Its function is as follows. Kinase that plays a key role in regulation of glucose and fatty acid metabolism and homeostasis via phosphorylation of the pyruvate dehydrogenase subunits PDHA1 and PDHA2. This inhibits pyruvate dehydrogenase activity, and thereby regulates metabolite flux through the tricarboxylic acid cycle, down-regulates aerobic respiration and inhibits the formation of acetyl-coenzyme A from pyruvate. Inhibition of pyruvate dehydrogenase decreases glucose utilization and increases fat metabolism in response to prolonged fasting and starvation. Plays an important role in maintaining normal blood glucose levels under starvation, and is involved in the insulin signaling cascade. Via its regulation of pyruvate dehydrogenase activity, plays an important role in maintaining normal blood pH and in preventing the accumulation of ketone bodies under starvation. In the fed state, mediates cellular responses to glucose levels and to a high-fat diet. Regulates both fatty acid oxidation and de novo fatty acid biosynthesis. Plays a role in the generation of reactive oxygen species. Protects detached epithelial cells against anoikis. Plays a role in cell proliferation via its role in regulating carbohydrate and fatty acid metabolism. The chain is [Pyruvate dehydrogenase (acetyl-transferring)] kinase isozyme 4, mitochondrial (PDK4) from Rhinolophus ferrumequinum (Greater horseshoe bat).